The chain runs to 478 residues: Zinc finger and SCAN domain-containing protein 26 (478 aa).

A Glycyl lysine isopeptide (Lys-Gly) (interchain with G-Cter in SUMO2) cross-link involves residue Lys17. Residues 51–133 (CKQFRQLRYE…VVLEDLQLDL (83 aa)) form the SCAN box domain. Disordered regions lie at residues 159-181 (GVQEQQVRHECEVTKPEKEKGEE) and 200-226 (ESSGKISEPMEAHNEGSNLERHQAKPK). 2 stretches are compositionally biased toward basic and acidic residues: residues 164 to 181 (QVRHECEVTKPEKEKGEE) and 207 to 226 (EPMEAHNEGSNLERHQAKPK). A C2H2-type 1; degenerate zinc finger spans residues 231–253 (YKCSEREQRFIQHLDLIEHASTH). 7 consecutive C2H2-type zinc fingers follow at residues 282–304 (HQCHECGKAFQRSSHLVRHQKIH), 310–332 (YQCNECGKVFSQNAGLLEHLRIH), 338–360 (YLCIHCGKNFRRSSHLNRHQRIH), 366–388 (CECKECGKTFSQALLLTHHQRIH), 394–416 (HQCNECGKAFSLTSDLIRHHRIH), 422–444 (FKCNICQKAFRLNSHLAQHVRIH), and 450–472 (YQCSECGEAFRQRSGLFQHQRYH).

It localises to the nucleus. May be involved in transcriptional regulation. In Homo sapiens (Human), this protein is Zinc finger and SCAN domain-containing protein 26 (ZSCAN26).